Reading from the N-terminus, the 119-residue chain is Holo-[acyl-carrier-protein] synthase (119 aa).

2 residues coordinate Mg(2+): Asp5 and Glu51.

Belongs to the P-Pant transferase superfamily. AcpS family. It depends on Mg(2+) as a cofactor.

It is found in the cytoplasm. The enzyme catalyses apo-[ACP] + CoA = holo-[ACP] + adenosine 3',5'-bisphosphate + H(+). Its function is as follows. Transfers the 4'-phosphopantetheine moiety from coenzyme A to a Ser of acyl-carrier-protein. This is Holo-[acyl-carrier-protein] synthase from Helicobacter pylori (strain ATCC 700392 / 26695) (Campylobacter pylori).